The following is a 200-amino-acid chain: VIGGDECNINEHPFLVALHTARXXRFYCAGTLINQEWVLTAARCDRXXXXXILGVHSKXXXXXXXXXXXXXXXXXXXXXXTYTRWDKDIMLIRLKRXXXXXXXXXXXXXXXXXXXXXXXXXIMGWGTITTTKVTYPDVPHCADINMFDYSVCQKXXXKLPEKSRTLCAGILQGGIDSCKGISGGPLICNGEIQGIVSYGK.

The 200-residue stretch at 1 to 200 (VIGGDECNIN…EIQGIVSYGK (200 aa)) folds into the Peptidase S1 domain. Active-site charge relay system residues include Asp-88 and Ser-182.

Monomer. In terms of processing, N-glycosylated. The protein exist in multiple isoforms. As to expression, expressed by the venom gland.

It is found in the secreted. With respect to regulation, inhibited by Pefabloc (90% inhibition), DTT (90%), Zn(2+) (80%), trypsin inhibitor II (50%), and benzamidine (45%), but not inhibited by EDTA, Ca(2+), Mg(2+) and L-Cys. Functionally, snake venom serine protease active on several blood coagulation enzymes. It completely cleaves fibrinogen Aalpha chain (FGA) after 120 minutes, partially cleaves Bbeta chain (FGB) (overnight) and has no activity on gamma chain. It does not release fibrinopeptides A and/or B exclusively, since the enzyme does not provoke fibrin polymerisation. It also degrades fibrin as efficiently as plasmin, and exhibits potent ability to cleave plasminogen and prothrombin, as well as heavy chain of factor X (F10). In vitro, it cleaves insulin B-chain (at positions His38-Leu39, Ala40-Leu41 and Tyr16-Leu17). The chain is Snake venom serine protease VaSP1 from Vipera ammodytes ammodytes (Western sand viper).